The sequence spans 1392 residues: L-2-aminoadipate reductase (1392 aa).

Lysine 541 is covalently cross-linked (Glycyl lysine isopeptide (Lys-Gly) (interchain with G-Cter in ubiquitin)). A Carrier domain is found at 843–920 (SQFTNVEREV…AFAAEIDRIK (78 aa)). Serine 880 bears the O-(pantetheine 4'-phosphoryl)serine mark. Lysine 1276 is covalently cross-linked (Glycyl lysine isopeptide (Lys-Gly) (interchain with G-Cter in ubiquitin)).

It belongs to the ATP-dependent AMP-binding enzyme family. The cofactor is pantetheine 4'-phosphate.

The catalysed reaction is (S)-2-amino-6-oxohexanoate + NADP(+) + H2O = L-2-aminoadipate + NADPH + 2 H(+). It catalyses the reaction (S)-2-amino-6-oxohexanoate + NAD(+) + H2O = L-2-aminoadipate + NADH + 2 H(+). The enzyme catalyses (S)-2-amino-6-oxohexanoate + AMP + diphosphate + NADP(+) = L-2-aminoadipate + ATP + NADPH + H(+). It participates in amino-acid biosynthesis; L-lysine biosynthesis via AAA pathway; L-lysine from L-alpha-aminoadipate (fungal route): step 1/3. Functionally, catalyzes the activation of alpha-aminoadipate by ATP-dependent adenylation and the reduction of activated alpha-aminoadipate by NADPH. The activated alpha-aminoadipate is bound to the phosphopantheinyl group of the enzyme itself before it is reduced to (S)-2-amino-6-oxohexanoate. The protein is L-2-aminoadipate reductase (LYS2) of Saccharomyces cerevisiae (strain ATCC 204508 / S288c) (Baker's yeast).